The following is a 201-amino-acid chain: Cytochrome c oxidase assembly protein CtaG (201 aa).

Residues 1-12 (MTDQGENEKKQR) lie on the Cytoplasmic side of the membrane. The chain crosses the membrane as a helical; Signal-anchor for type II membrane protein span at residues 13-35 (RSNATIAVACLSFFVCMIGAAYA). Over 36–201 (SVPLYRIFCQ…KAVGSTRNGG (166 aa)) the chain is Periplasmic.

Belongs to the COX11/CtaG family.

Its subcellular location is the cell inner membrane. Its function is as follows. Exerts its effect at some terminal stage of cytochrome c oxidase synthesis, probably by being involved in the insertion of the copper B into subunit I. The sequence is that of Cytochrome c oxidase assembly protein CtaG from Brucella suis biovar 1 (strain 1330).